The sequence spans 635 residues: Ankyrin repeat and SOCS box protein 2 (635 aa).

The tract at residues Arg8–Gln16 is required for FLNA degradation. The UIM domain occupies Ser26–Gly45. 12 ANK repeats span residues Ala104 to Glu133, Glu137 to Gln167, Gln171 to Ile200, Ser204 to His233, Arg237 to Ser266, Tyr270 to Thr299, Asp303 to Lys332, Asp336 to Ile365, Ser368 to Thr397, Arg410 to Arg439, Asp440 to Ala469, and Thr476 to Pro504. Ser371 carries the post-translational modification Phosphoserine; by MAPK. Residues Ile586 to Gln635 enclose the SOCS box domain.

It belongs to the ankyrin SOCS box (ASB) family. In terms of assembly, component of a probable ECS E3 ubiquitin-protein ligase complex which contains CUL5, either RBX1 or RNF7/RBX2, Elongin BC complex (ELOB and ELOC) and ASB2. Interacts with SKP2. Through its interaction with SKP2, likely to bridge the formation of dimeric E3-ubiquitin-protein ligase complexes composed of an ECS complex and an SCF(SKP2) complex. Interacts with JAK2; the interaction targets JAK2 for Notch-mediated proteasomal degradation. Interacts with TCF3/E2A; the interaction is mediated by SKP2 and targets TCF3 for Notch-mediated proteasomal degradation. Interacts with DES. In terms of processing, monoubiquitinated. Not monoubiquitinated. Post-translationally, phosphorylation at Ser-371 is required for association with FLNA and subsequent FLNA degradation. Expressed in muscle cells. As to expression, expressed in hematopoietic cells.

It localises to the cytoplasm. The protein localises to the cytoskeleton. Its subcellular location is the stress fiber. It is found in the myofibril. The protein resides in the sarcomere. It localises to the z line. Its pathway is protein modification; protein ubiquitination. Its function is as follows. Substrate-recognition component of a SCF-like ECS (Elongin-Cullin-SOCS-box protein) E3 ubiquitin-protein ligase complex which mediates the ubiquitination and subsequent proteasomal degradation of target proteins. Mediates Notch-induced ubiquitination and degradation of substrates including TCF3/E2A and JAK2. Required during embryonic heart development for complete heart looping. Required for cardiomyocyte differentiation. Specifically promotes the ubiquitination of SMAD9 and targets it for proteasomal degradation, leading to avoid excessive accumulation of SMAD9. Plays a role in the regulation of NK-cell migration by modulating protein levels of filamin A/FLNA via regulation of its ubiquitination and proteasome degradation. In terms of biological role, involved in myogenic differentiation and targets filamin FLNB for proteasomal degradation but not filamin FLNA. Also targets DES for proteasomal degradation. Acts as a negative regulator of skeletal muscle mass. Functionally, targets filamins FLNA and FLNB for proteasomal degradation. This leads to enhanced adhesion of hematopoietic cells to fibronectin. Required for FLNA degradation in immature cardiomyocytes which is necessary for actin cytoskeleton remodeling, leading to proper organization of myofibrils and function of mature cardiomyocytes. Required for degradation of FLNA and FLNB in immature dendritic cells (DC) which enhances immature DC migration by promoting DC podosome formation and DC-mediated degradation of the extracellular matrix. Does not promote proteasomal degradation of tyrosine-protein kinases JAK1 or JAK2 in hematopoietic cells. The protein is Ankyrin repeat and SOCS box protein 2 (ASB2) of Homo sapiens (Human).